The sequence spans 91 residues: Ice-structuring protein 2A7 (91 aa).

A signal peptide spans 1–21 (MALSLFTVGQLIFLFWTMRIT). A propeptide spans 22–39 (EANPDPAAKAVPAAAAPD) (removed by a dipeptidylpeptidase).

This sequence belongs to the type-I AFP family. As to expression, detected in blood serum (at protein level).

Its subcellular location is the secreted. Contributes to protect fish blood from freezing at subzero sea water temperatures. Lowers the blood freezing point. Binds to nascent ice crystals and prevents further growth. The protein is Ice-structuring protein 2A7 of Pseudopleuronectes americanus (Winter flounder).